Consider the following 263-residue polypeptide: Shikimate dehydrogenase (NADP(+)) (263 aa).

Shikimate contacts are provided by residues 16 to 18 (SKS) and threonine 65. Catalysis depends on lysine 69, which acts as the Proton acceptor. Shikimate is bound by residues asparagine 90 and aspartate 105. Residues 125–129 (GSGGS) and leucine 208 contribute to the NADP(+) site. Tyrosine 210 lines the shikimate pocket. NADP(+) is bound at residue glycine 230.

Belongs to the shikimate dehydrogenase family. As to quaternary structure, homodimer.

The enzyme catalyses shikimate + NADP(+) = 3-dehydroshikimate + NADPH + H(+). It functions in the pathway metabolic intermediate biosynthesis; chorismate biosynthesis; chorismate from D-erythrose 4-phosphate and phosphoenolpyruvate: step 4/7. Involved in the biosynthesis of the chorismate, which leads to the biosynthesis of aromatic amino acids. Catalyzes the reversible NADPH linked reduction of 3-dehydroshikimate (DHSA) to yield shikimate (SA). The protein is Shikimate dehydrogenase (NADP(+)) of Helicobacter acinonychis (strain Sheeba).